Here is a 529-residue protein sequence, read N- to C-terminus: ATP synthase F(1) complex subunit beta, mitochondrial (529 aa).

The N-terminal 47 residues, 1-47 (MLGFVGRVAAAPASGALRRLTPSASLPPAQLLLRAAPTAVHPVRDYA), are a transit peptide targeting the mitochondrion. Serine 106 carries O-linked (GlcNAc) serine glycosylation. Residues lysine 124, lysine 133, and lysine 161 each carry the N6-acetyllysine; alternate modification. N6-succinyllysine; alternate is present on residues lysine 124, lysine 133, and lysine 161. Lysine 198 is modified (N6-acetyllysine). Residues glycine 209, valine 210, glycine 211, lysine 212, threonine 213, and valine 214 each contribute to the ADP site. An ATP-binding site is contributed by glycine 209. Residues glycine 209, valine 210, glycine 211, lysine 212, and threonine 213 each contribute to the phosphate site. ATP contacts are provided by glycine 211, lysine 212, threonine 213, and valine 214. Position 213 (threonine 213) interacts with Mg(2+). A Mg(2+)-binding site is contributed by glutamate 238. ATP is bound at residue arginine 239. N6-acetyllysine; alternate occurs at positions 259 and 264. 2 positions are modified to N6-succinyllysine; alternate: lysine 259 and lysine 264. Position 312 is a phosphothreonine (threonine 312). Serine 415 carries the post-translational modification Phosphoserine. Lysine 426 bears the N6-acetyllysine mark. Phosphoserine is present on serine 433. Residues lysine 480 and lysine 485 each carry the N6-acetyllysine modification. Lysine 522 is modified (N6-acetyllysine; alternate). Lysine 522 is modified (N6-succinyllysine; alternate). Position 529 is a phosphoserine (serine 529).

It belongs to the ATPase alpha/beta chains family. Homotrimer. Component of the ATP synthase complex composed at least of ATP5F1A/subunit alpha, ATP5F1B/subunit beta, ATP5MC1/subunit c (homooctomer), MT-ATP6/subunit a, MT-ATP8/subunit 8, ATP5ME/subunit e, ATP5MF/subunit f, ATP5MG/subunit g, ATP5MK/subunit k, ATP5MJ/subunit j, ATP5F1C/subunit gamma, ATP5F1D/subunit delta, ATP5F1E/subunit epsilon, ATP5PF/subunit F6, ATP5PB/subunit b, ATP5PD/subunit d, ATP5PO/subunit OSCP. ATP synthase complex consists of a soluble F(1) head domain (subunits alpha(3) and beta(3)) - the catalytic core - and a membrane F(0) domain - the membrane proton channel (subunits c, a, 8, e, f, g, k and j). These two domains are linked by a central stalk (subunits gamma, delta, and epsilon) rotating inside the F1 region and a stationary peripheral stalk (subunits F6, b, d, and OSCP). Interacts with PPIF. Interacts with BCL2L1 isoform BCL-X(L); the interaction mediates the association of BCL2L1 isoform BCL-X(L) with the mitochondrial membrane F(1)F(0) ATP synthase and enhances neurons metabolic efficiency. Interacts with CLN5 and PPT1. Interacts with S100A1; this interaction increases F1-ATPase activity. Interacts with MTLN. Interacts with TTC5/STRAP; the interaction results in decreased mitochondrial ATP production. The cofactor is Mg(2+).

The protein resides in the mitochondrion inner membrane. The catalysed reaction is ATP + H2O + 4 H(+)(in) = ADP + phosphate + 5 H(+)(out). In terms of biological role, catalytic subunit beta, of the mitochondrial membrane ATP synthase complex (F(1)F(0) ATP synthase or Complex V) that produces ATP from ADP in the presence of a proton gradient across the membrane which is generated by electron transport complexes of the respiratory chain. ATP synthase complex consist of a soluble F(1) head domain - the catalytic core - and a membrane F(1) domain - the membrane proton channel. These two domains are linked by a central stalk rotating inside the F(1) region and a stationary peripheral stalk. During catalysis, ATP synthesis in the catalytic domain of F(1) is coupled via a rotary mechanism of the central stalk subunits to proton translocation. In vivo, can only synthesize ATP although its ATP hydrolase activity can be activated artificially in vitro. With the subunit alpha (ATP5F1A), forms the catalytic core in the F(1) domain. This Homo sapiens (Human) protein is ATP synthase F(1) complex subunit beta, mitochondrial.